Consider the following 486-residue polypeptide: Bifunctional protein GlmU (486 aa).

Positions 1–241 are pyrophosphorylase; that stretch reads MSASDSSSAV…ARELAGVNDR (241 aa). Residues 13–16, Lys27, Gln84, and 89–90 contribute to the UDP-N-acetyl-alpha-D-glucosamine site; these read LAAG and GT. A Mg(2+)-binding site is contributed by Asp114. UDP-N-acetyl-alpha-D-glucosamine is bound by residues Gly151, Glu166, Asn181, and Asn239. Asn239 is a binding site for Mg(2+). A linker region spans residues 242–262; that stretch reads VQLAEAGAELNRRTVEAAMRG. Positions 263–486 are N-acetyltransferase; that stretch reads GATIVDPATT…AQNSVPNQEG (224 aa). Residues Arg344 and Lys362 each coordinate UDP-N-acetyl-alpha-D-glucosamine. His374 functions as the Proton acceptor in the catalytic mechanism. The UDP-N-acetyl-alpha-D-glucosamine site is built by Tyr377 and Asn388. Acetyl-CoA is bound by residues Ala391, 397 to 398, Ser416, and Ala434; that span reads NY. The interval 464-486 is disordered; that stretch reads KRPGTAAADAAAAAQNSVPNQEG.

It in the N-terminal section; belongs to the N-acetylglucosamine-1-phosphate uridyltransferase family. This sequence in the C-terminal section; belongs to the transferase hexapeptide repeat family. As to quaternary structure, homotrimer. It depends on Mg(2+) as a cofactor.

Its subcellular location is the cytoplasm. The catalysed reaction is alpha-D-glucosamine 1-phosphate + acetyl-CoA = N-acetyl-alpha-D-glucosamine 1-phosphate + CoA + H(+). It carries out the reaction N-acetyl-alpha-D-glucosamine 1-phosphate + UTP + H(+) = UDP-N-acetyl-alpha-D-glucosamine + diphosphate. Its pathway is nucleotide-sugar biosynthesis; UDP-N-acetyl-alpha-D-glucosamine biosynthesis; N-acetyl-alpha-D-glucosamine 1-phosphate from alpha-D-glucosamine 6-phosphate (route II): step 2/2. It participates in nucleotide-sugar biosynthesis; UDP-N-acetyl-alpha-D-glucosamine biosynthesis; UDP-N-acetyl-alpha-D-glucosamine from N-acetyl-alpha-D-glucosamine 1-phosphate: step 1/1. The protein operates within bacterial outer membrane biogenesis; LPS lipid A biosynthesis. Functionally, catalyzes the last two sequential reactions in the de novo biosynthetic pathway for UDP-N-acetylglucosamine (UDP-GlcNAc). The C-terminal domain catalyzes the transfer of acetyl group from acetyl coenzyme A to glucosamine-1-phosphate (GlcN-1-P) to produce N-acetylglucosamine-1-phosphate (GlcNAc-1-P), which is converted into UDP-GlcNAc by the transfer of uridine 5-monophosphate (from uridine 5-triphosphate), a reaction catalyzed by the N-terminal domain. The protein is Bifunctional protein GlmU of Corynebacterium efficiens (strain DSM 44549 / YS-314 / AJ 12310 / JCM 11189 / NBRC 100395).